A 61-amino-acid chain; its full sequence is Rubredoxin 3 (61 aa).

The Rubredoxin-like domain occupies 1-53 (MSSYRCPVCEYVYDESKGAPREGFPAGTPWDAVPDDWCCPDCGVREKLDFEPM). Residues cysteine 6, cysteine 9, cysteine 39, and cysteine 42 each coordinate Fe cation.

Belongs to the rubredoxin family. Requires Fe(3+) as cofactor.

Its function is as follows. Involved in the hydrocarbon hydroxylating system, which transfers electrons from NADH to rubredoxin reductase and then through rubredoxin to alkane 1 monooxygenase. The chain is Rubredoxin 3 (rubA3) from Rhodococcus erythropolis (Arthrobacter picolinophilus).